The sequence spans 960 residues: Glycine dehydrogenase (decarboxylating) (960 aa).

N6-(pyridoxal phosphate)lysine is present on Lys-709.

The protein belongs to the GcvP family. In terms of assembly, the glycine cleavage system is composed of four proteins: P, T, L and H. The cofactor is pyridoxal 5'-phosphate.

It catalyses the reaction N(6)-[(R)-lipoyl]-L-lysyl-[glycine-cleavage complex H protein] + glycine + H(+) = N(6)-[(R)-S(8)-aminomethyldihydrolipoyl]-L-lysyl-[glycine-cleavage complex H protein] + CO2. Functionally, the glycine cleavage system catalyzes the degradation of glycine. The P protein binds the alpha-amino group of glycine through its pyridoxal phosphate cofactor; CO(2) is released and the remaining methylamine moiety is then transferred to the lipoamide cofactor of the H protein. The sequence is that of Glycine dehydrogenase (decarboxylating) from Edwardsiella ictaluri (strain 93-146).